The sequence spans 491 residues: Probable glycine dehydrogenase (decarboxylating) subunit 2 (491 aa).

K273 is modified (N6-(pyridoxal phosphate)lysine).

Belongs to the GcvP family. C-terminal subunit subfamily. As to quaternary structure, the glycine cleavage system is composed of four proteins: P, T, L and H. In this organism, the P 'protein' is a heterodimer of two subunits. Pyridoxal 5'-phosphate is required as a cofactor.

The catalysed reaction is N(6)-[(R)-lipoyl]-L-lysyl-[glycine-cleavage complex H protein] + glycine + H(+) = N(6)-[(R)-S(8)-aminomethyldihydrolipoyl]-L-lysyl-[glycine-cleavage complex H protein] + CO2. The glycine cleavage system catalyzes the degradation of glycine. The P protein binds the alpha-amino group of glycine through its pyridoxal phosphate cofactor; CO(2) is released and the remaining methylamine moiety is then transferred to the lipoamide cofactor of the H protein. The protein is Probable glycine dehydrogenase (decarboxylating) subunit 2 of Bacillus cereus (strain ATCC 10987 / NRS 248).